The following is a 400-amino-acid chain: WD repeat and FYVE domain-containing protein 2 (400 aa).

6 WD repeats span residues glycine 22–proline 61, alanine 66–threonine 105, alanine 112–glycine 150, arginine 153–leucine 192, glycine 197–isoleucine 236, and glycine 240–proline 279. The segment at tryptophan 281 to threonine 352 adopts an FYVE-type zinc-finger fold. 8 residues coordinate Zn(2+): cysteine 287, cysteine 290, cysteine 314, cysteine 317, cysteine 322, cysteine 325, cysteine 344, and cysteine 347. The WD 7 repeat unit spans residues aspartate 364–valine 399.

Homodimer. Interacts (via WD repeats 1-3) with AKT1, AKT2, PRKCZ and PRKCI. Interacts with VAMP2. Forms a complex with VAMP2 and PRKCZ. Interacts with FOXO1. Forms a complex with AKT1 and FOXO1. In terms of tissue distribution, highly expressed in the brain (at protein level).

It is found in the endosome. Its subcellular location is the early endosome. The protein localises to the cytoplasm. Functionally, acts in an adapter protein-like fashion to mediate the interaction between the kinase PRKCZ and its substrate VAMP2 and increases the PRKCZ-dependent phosphorylation of VAMP2. Positively regulates adipocyte differentiation, by facilitating the phosphorylation and thus inactivation of the anti-adipogenetic transcription factor FOXO1 by the kinase AKT1. Plays a role in endosomal control of AKT2 signaling; required for insulin-stimulated AKT2 phosphorylation and glucose uptake and insulin-stimulated phosphorylation of AKT2 substrates. Participates in transferrin receptor endocytosis. The polypeptide is WD repeat and FYVE domain-containing protein 2 (Wdfy2) (Mus musculus (Mouse)).